Consider the following 474-residue polypeptide: Dihydrolipoyl dehydrogenase (474 aa).

FAD contacts are provided by residues 36–44 (EAKDMGGTC), lysine 53, and glycine 119. Cysteine 44 and cysteine 49 are joined by a disulfide. Residues 184–188 (GSGYI), glutamate 207, and 275–278 (ATGR) contribute to the NAD(+) site. FAD is bound by residues aspartate 323 and alanine 331. Catalysis depends on histidine 459, which acts as the Proton acceptor.

This sequence belongs to the class-I pyridine nucleotide-disulfide oxidoreductase family. Homodimer. FAD is required as a cofactor.

It localises to the cell inner membrane. It catalyses the reaction N(6)-[(R)-dihydrolipoyl]-L-lysyl-[protein] + NAD(+) = N(6)-[(R)-lipoyl]-L-lysyl-[protein] + NADH + H(+). In terms of biological role, lipoamide dehydrogenase is a component of the alpha-ketoacid dehydrogenase complexes. The polypeptide is Dihydrolipoyl dehydrogenase (lpdA) (Synechocystis sp. (strain ATCC 27184 / PCC 6803 / Kazusa)).